A 186-amino-acid chain; its full sequence is Peptidyl-tRNA hydrolase (186 aa).

Y14 lines the tRNA pocket. The active-site Proton acceptor is the H19. The tRNA site is built by Y61, N63, and N107.

Belongs to the PTH family. In terms of assembly, monomer.

Its subcellular location is the cytoplasm. It carries out the reaction an N-acyl-L-alpha-aminoacyl-tRNA + H2O = an N-acyl-L-amino acid + a tRNA + H(+). In terms of biological role, hydrolyzes ribosome-free peptidyl-tRNAs (with 1 or more amino acids incorporated), which drop off the ribosome during protein synthesis, or as a result of ribosome stalling. Its function is as follows. Catalyzes the release of premature peptidyl moieties from peptidyl-tRNA molecules trapped in stalled 50S ribosomal subunits, and thus maintains levels of free tRNAs and 50S ribosomes. The sequence is that of Peptidyl-tRNA hydrolase from Helicobacter acinonychis (strain Sheeba).